The primary structure comprises 148 residues: Large ribosomal subunit protein uL15 (148 aa).

Positions 1-30 (MPSKLRKTRKLRGHVSHGHGRIGKHRKHPG) are enriched in basic residues. The disordered stretch occupies residues 1-38 (MPSKLRKTRKLRGHVSHGHGRIGKHRKHPGGRGNAGGM).

Belongs to the universal ribosomal protein uL15 family. As to quaternary structure, component of the large ribosomal subunit.

It localises to the cytoplasm. Component of the large ribosomal subunit. The ribosome is a large ribonucleoprotein complex responsible for the synthesis of proteins in the cell. In Xenopus laevis (African clawed frog), this protein is Large ribosomal subunit protein uL15 (rpl27a).